We begin with the raw amino-acid sequence, 569 residues long: Alpha-keto-acid decarboxylase (569 aa).

E57 is a thiamine diphosphate binding site. The segment at 392 to 474 (TAFYGMVEHR…VVVNNDGYTI (83 aa)) is thiamine pyrophosphate binding. 3 residues coordinate Mg(2+): D442, N469, and G471.

The protein belongs to the TPP enzyme family. A metal cation serves as cofactor. The cofactor is thiamine diphosphate.

In terms of biological role, decarboxylates branched-chain and aromatic alpha-keto acids to aldehydes. The polypeptide is Alpha-keto-acid decarboxylase (kdc) (Mycobacterium leprae (strain TN)).